The primary structure comprises 546 residues: 2-isopropylmalate synthase (546 aa).

Residues 8-271 (ILIFDTTLRD…NSFFKRNPDS (264 aa)) enclose the Pyruvate carboxyltransferase domain. Aspartate 17, histidine 208, histidine 210, and asparagine 244 together coordinate Mn(2+). The regulatory domain stretch occupies residues 408 to 546 (QLSLVQVSCG…TNTFLSNNAN (139 aa)).

It belongs to the alpha-IPM synthase/homocitrate synthase family. LeuA type 1 subfamily. In terms of assembly, homodimer. Mn(2+) is required as a cofactor.

It localises to the cytoplasm. The enzyme catalyses 3-methyl-2-oxobutanoate + acetyl-CoA + H2O = (2S)-2-isopropylmalate + CoA + H(+). It participates in amino-acid biosynthesis; L-leucine biosynthesis; L-leucine from 3-methyl-2-oxobutanoate: step 1/4. Catalyzes the condensation of the acetyl group of acetyl-CoA with 3-methyl-2-oxobutanoate (2-ketoisovalerate) to form 3-carboxy-3-hydroxy-4-methylpentanoate (2-isopropylmalate). The sequence is that of 2-isopropylmalate synthase from Prochlorococcus marinus (strain AS9601).